The sequence spans 410 residues: LL-diaminopimelate aminotransferase (410 aa).

Tyr-15 and Gly-42 together coordinate substrate. Residues Tyr-72, 108-109 (SK), Tyr-132, Asn-187, Tyr-218, and 246-248 (SFS) contribute to the pyridoxal 5'-phosphate site. 3 residues coordinate substrate: Lys-109, Tyr-132, and Asn-187. An N6-(pyridoxal phosphate)lysine modification is found at Lys-249. Positions 257 and 292 each coordinate pyridoxal 5'-phosphate. 2 residues coordinate substrate: Asn-292 and Arg-388.

Belongs to the class-I pyridoxal-phosphate-dependent aminotransferase family. LL-diaminopimelate aminotransferase subfamily. In terms of assembly, homodimer. Pyridoxal 5'-phosphate is required as a cofactor.

The enzyme catalyses (2S,6S)-2,6-diaminopimelate + 2-oxoglutarate = (S)-2,3,4,5-tetrahydrodipicolinate + L-glutamate + H2O + H(+). It participates in amino-acid biosynthesis; L-lysine biosynthesis via DAP pathway; LL-2,6-diaminopimelate from (S)-tetrahydrodipicolinate (aminotransferase route): step 1/1. In terms of biological role, involved in the synthesis of meso-diaminopimelate (m-DAP or DL-DAP), required for both lysine and peptidoglycan biosynthesis. Catalyzes the direct conversion of tetrahydrodipicolinate to LL-diaminopimelate. The protein is LL-diaminopimelate aminotransferase of Geobacter sulfurreducens (strain ATCC 51573 / DSM 12127 / PCA).